Consider the following 400-residue polypeptide: Centrosomal protein CEP57L1 (400 aa).

Phosphoserine is present on Ser45. Coiled coils occupy residues 47-111 (NNQA…KKDI) and 138-213 (NVER…QDRA). Disordered regions lie at residues 222–261 (REPP…EPVS) and 314–400 (MESK…KWEQ). The span at 244–258 (RTTSQARANPQSSGE) shows a compositional bias: polar residues. The stretch at 261 to 345 (SICDSLSELL…EKIENSRINE (85 aa)) forms a coiled coil. 2 stretches are compositionally biased toward basic and acidic residues: residues 314–342 (MESK…ENSR) and 391–400 (LRRDDIKWEQ).

It belongs to the translokin family.

Its subcellular location is the cytoplasm. The protein resides in the cytoskeleton. It localises to the microtubule organizing center. The protein localises to the centrosome. Its function is as follows. Centrosomal protein which may be required for microtubule attachment to centrosomes. This is Centrosomal protein CEP57L1 (Cep57l1) from Mus musculus (Mouse).